The chain runs to 212 residues: Thiamine-phosphate synthase (212 aa).

Residues 33 to 37 and Asn-65 each bind 4-amino-2-methyl-5-(diphosphooxymethyl)pyrimidine; that span reads QMRFK. The Mg(2+) site is built by Asp-66 and Asp-85. Thr-104 contacts 4-amino-2-methyl-5-(diphosphooxymethyl)pyrimidine. 130 to 132 is a binding site for 2-[(2R,5Z)-2-carboxy-4-methylthiazol-5(2H)-ylidene]ethyl phosphate; it reads TNT. A 4-amino-2-methyl-5-(diphosphooxymethyl)pyrimidine-binding site is contributed by Lys-133. Gly-166 serves as a coordination point for 2-[(2R,5Z)-2-carboxy-4-methylthiazol-5(2H)-ylidene]ethyl phosphate.

It belongs to the thiamine-phosphate synthase family. Mg(2+) is required as a cofactor.

The enzyme catalyses 2-[(2R,5Z)-2-carboxy-4-methylthiazol-5(2H)-ylidene]ethyl phosphate + 4-amino-2-methyl-5-(diphosphooxymethyl)pyrimidine + 2 H(+) = thiamine phosphate + CO2 + diphosphate. It catalyses the reaction 2-(2-carboxy-4-methylthiazol-5-yl)ethyl phosphate + 4-amino-2-methyl-5-(diphosphooxymethyl)pyrimidine + 2 H(+) = thiamine phosphate + CO2 + diphosphate. The catalysed reaction is 4-methyl-5-(2-phosphooxyethyl)-thiazole + 4-amino-2-methyl-5-(diphosphooxymethyl)pyrimidine + H(+) = thiamine phosphate + diphosphate. The protein operates within cofactor biosynthesis; thiamine diphosphate biosynthesis; thiamine phosphate from 4-amino-2-methyl-5-diphosphomethylpyrimidine and 4-methyl-5-(2-phosphoethyl)-thiazole: step 1/1. Its function is as follows. Condenses 4-methyl-5-(beta-hydroxyethyl)thiazole monophosphate (THZ-P) and 2-methyl-4-amino-5-hydroxymethyl pyrimidine pyrophosphate (HMP-PP) to form thiamine monophosphate (TMP). The polypeptide is Thiamine-phosphate synthase (Flavobacterium johnsoniae (strain ATCC 17061 / DSM 2064 / JCM 8514 / BCRC 14874 / CCUG 350202 / NBRC 14942 / NCIMB 11054 / UW101) (Cytophaga johnsonae)).